Reading from the N-terminus, the 380-residue chain is tRNA-specific 2-thiouridylase MnmA (380 aa).

ATP-binding positions include 9-16 (GVSGGVDS) and Met35. Residues 94-96 (NPD) form an interaction with target base in tRNA region. The Nucleophile role is filled by Cys99. Cysteines 99 and 195 form a disulfide. Gly123 is an ATP binding site. The segment at 145 to 147 (KDQ) is interaction with tRNA. The Cysteine persulfide intermediate role is filled by Cys195. The interval 308 to 309 (RY) is interaction with tRNA.

It belongs to the MnmA/TRMU family.

It localises to the cytoplasm. The catalysed reaction is S-sulfanyl-L-cysteinyl-[protein] + uridine(34) in tRNA + AH2 + ATP = 2-thiouridine(34) in tRNA + L-cysteinyl-[protein] + A + AMP + diphosphate + H(+). Functionally, catalyzes the 2-thiolation of uridine at the wobble position (U34) of tRNA, leading to the formation of s(2)U34. The polypeptide is tRNA-specific 2-thiouridylase MnmA (Stenotrophomonas maltophilia (strain K279a)).